A 93-amino-acid polypeptide reads, in one-letter code: UPF0147 protein PH1921.2 (93 aa).

Belongs to the UPF0147 family.

The chain is UPF0147 protein PH1921.2 from Pyrococcus horikoshii (strain ATCC 700860 / DSM 12428 / JCM 9974 / NBRC 100139 / OT-3).